A 488-amino-acid polypeptide reads, in one-letter code: Transmembrane protein 39A-B (488 aa).

Residues N31 and N39 are each glycosylated (N-linked (GlcNAc...) asparagine). 3 helical membrane passes run 72–92 (GLVF…TQYI), 110–130 (TSLN…VMLA), and 155–175 (LIIG…WTTV). Residue N180 is glycosylated (N-linked (GlcNAc...) asparagine). Residues 182–202 (SVLNLLFLGYPFGVYVPLCCF) traverse the membrane as a helical segment. An N-linked (GlcNAc...) asparagine glycan is attached at N206. 4 helical membrane passes run 287-307 (EVLF…LCFV), 319-339 (CEHL…QLLP), 420-440 (LLNL…YSLL), and 446-466 (NHTL…FKLL).

It belongs to the TMEM39 family.

It is found in the membrane. The chain is Transmembrane protein 39A-B (tmem39a-b) from Xenopus laevis (African clawed frog).